We begin with the raw amino-acid sequence, 342 residues long: N-acetyl-gamma-glutamyl-phosphate reductase (342 aa).

Cys-149 is an active-site residue.

The protein belongs to the NAGSA dehydrogenase family. Type 1 subfamily.

It localises to the cytoplasm. It carries out the reaction N-acetyl-L-glutamate 5-semialdehyde + phosphate + NADP(+) = N-acetyl-L-glutamyl 5-phosphate + NADPH + H(+). The protein operates within amino-acid biosynthesis; L-arginine biosynthesis; N(2)-acetyl-L-ornithine from L-glutamate: step 3/4. Catalyzes the NADPH-dependent reduction of N-acetyl-5-glutamyl phosphate to yield N-acetyl-L-glutamate 5-semialdehyde. This chain is N-acetyl-gamma-glutamyl-phosphate reductase, found in Jannaschia sp. (strain CCS1).